A 930-amino-acid chain; its full sequence is A disintegrin and metalloproteinase with thrombospondin motifs 5 (930 aa).

An N-terminal signal peptide occupies residues 1–16 (MLLGWASLLLCAFRLP). A propeptide spanning residues 17 to 261 (LAAVGPAATP…PQTWWRRRRR (245 aa)) is cleaved from the precursor. 2 disordered regions span residues 24-69 (ATPA…QRRR) and 206-231 (RASC…PSGR). A compositionally biased stretch (low complexity) spans 31–42 (AGQPPTAAAAAQ). Over residues 46 to 59 (RQGEEVQERAEPPG) the composition is skewed to basic and acidic residues. The Cysteine switch motif lies at 207 to 214 (ASCETPAS). Cys209 serves as a coordination point for Zn(2+). The region spanning 267 to 476 (RQVELLLVAD…GHGNCLLDLP (210 aa)) is the Peptidase M12B domain. 8 disulfides stabilise this stretch: Cys342–Cys394, Cys371–Cys376, Cys388–Cys471, Cys426–Cys455, Cys497–Cys519, Cys508–Cys529, Cys514–Cys548, and Cys542–Cys553. His410 is a binding site for Zn(2+). Glu411 is an active-site residue. His414 and His420 together coordinate Zn(2+). The 82-residue stretch at 485–566 (ELPGQTYDAT…TKKKYYSTSS (82 aa)) folds into the Disintegrin domain. The N-linked (GlcNAc...) asparagine glycan is linked to Asn498. Residues 567–622 (HGNWGSWGSWGQCSRSCGGGVQFAYRHCNNPAPRNNGRYCTGKRAIYRSCSLMPCP) form the TSP type-1 1 domain. C-linked (Man) tryptophan glycosylation is found at Trp570 and Trp573. Cystine bridges form between Cys579–Cys616, Cys583–Cys621, and Cys594–Cys606. O-linked (Fuc...) serine glycosylation is present at Ser582. Asn728, Asn802, and Asn807 each carry an N-linked (GlcNAc...) asparagine glycan. The segment at 732–874 (TKIVGTFNKK…HGSNKVGSHT (143 aa)) is spacer. Positions 875–929 (SQPQWVTGPWLACSRTCDTGWHTRTVQCQDGNRKLAKGCPLSQRPSAFKQCLLKK) constitute a TSP type-1 2 domain.

Requires Zn(2+) as cofactor. In terms of processing, the precursor is cleaved by furin and PCSK7 outside of the cell. Glycosylated. Can be O-fucosylated by POFUT2 on a serine or a threonine residue found within the consensus sequence C1-X(2)-(S/T)-C2-G of the TSP type-1 repeat domains where C1 and C2 are the first and second cysteine residue of the repeat, respectively. Fucosylated repeats can then be further glycosylated by the addition of a beta-1,3-glucose residue by the glucosyltransferase, B3GALTL. Fucosylation mediates the efficient secretion of ADAMTS family members. Can also be C-glycosylated with one or two mannose molecules on tryptophan residues within the consensus sequence W-X-X-W of the TPRs, and N-glycosylated. These other glycosylations can also facilitate secretion. Expressed at low level in placenta primarily but also detected in heart and brain, cervix, uterus, bladder, esophagus, rib cartilage, chondroblastoma, fibrous tissue and a joint capsule from an arthritic patient.

The protein localises to the secreted. The protein resides in the extracellular space. Its subcellular location is the extracellular matrix. In terms of biological role, metalloproteinase that plays an important role in connective tissue organization, development, inflammation and cell migration. Extracellular matrix (ECM) degrading enzyme that show proteolytic activity toward the hyalectan group of chondroitin sulfate proteoglycans (CSPGs) including ACAN, VCAN, BCAN and NCAN. Cleavage within the hyalectans occurs at Glu-Xaa recognition motifs. Plays a role in embryonic development, including limb and cardiac morphogenesis, and skeletal muscle development through its VCAN remodeling properties. Cleaves VCAN in the pericellular matrix surrounding myoblasts, facilitating myoblast contact and fusion which is required for skeletal muscle development and regeneration. Participates in development of brown adipose tissue and browning of white adipose tissue. Plays an important role for T-lymphocyte migration from draining lymph nodes following viral infection. The polypeptide is A disintegrin and metalloproteinase with thrombospondin motifs 5 (ADAMTS5) (Homo sapiens (Human)).